The primary structure comprises 244 residues: ATP synthase subunit 4, mitochondrial (244 aa).

A mitochondrion-targeting transit peptide spans M1–S36.

This sequence belongs to the eukaryotic ATPase B chain family. F-type ATPases have 2 components, CF(1) - the catalytic core - and CF(0) - the membrane proton channel. In yeast, the dimeric form of ATP synthase consists of 17 polypeptides: alpha, beta, gamma, delta, epsilon, 4 (B), 5 (OSCP), 6 (A), 8, 9 (C), d, E (Tim11), f, g, h, i/j and k.

It is found in the mitochondrion. The protein localises to the mitochondrion inner membrane. Its function is as follows. Mitochondrial membrane ATP synthase (F(1)F(0) ATP synthase or Complex V) produces ATP from ADP in the presence of a proton gradient across the membrane which is generated by electron transport complexes of the respiratory chain. F-type ATPases consist of two structural domains, F(1) - containing the extramembraneous catalytic core, and F(0) - containing the membrane proton channel, linked together by a central stalk and a peripheral stalk. During catalysis, ATP synthesis in the catalytic domain of F(1) is coupled via a rotary mechanism of the central stalk subunits to proton translocation. Part of the complex F(0) domain and the peripheric stalk, which acts as a stator to hold the catalytic alpha(3)beta(3) subcomplex and subunit a/ATP6 static relative to the rotary elements. In Paracoccidioides brasiliensis, this protein is ATP synthase subunit 4, mitochondrial (ATP4).